We begin with the raw amino-acid sequence, 342 residues long: RNA 3'-terminal phosphate cyclase (342 aa).

ATP contacts are provided by residues glutamine 103 and 283-287 (YLADQ). Histidine 308 acts as the Tele-AMP-histidine intermediate in catalysis.

It belongs to the RNA 3'-terminal cyclase family. Type 1 subfamily.

It localises to the cytoplasm. It carries out the reaction a 3'-end 3'-phospho-ribonucleotide-RNA + ATP = a 3'-end 2',3'-cyclophospho-ribonucleotide-RNA + AMP + diphosphate. Its function is as follows. Catalyzes the conversion of 3'-phosphate to a 2',3'-cyclic phosphodiester at the end of RNA. The mechanism of action of the enzyme occurs in 3 steps: (A) adenylation of the enzyme by ATP; (B) transfer of adenylate to an RNA-N3'P to produce RNA-N3'PP5'A; (C) and attack of the adjacent 2'-hydroxyl on the 3'-phosphorus in the diester linkage to produce the cyclic end product. The biological role of this enzyme is unknown but it is likely to function in some aspects of cellular RNA processing. The sequence is that of RNA 3'-terminal phosphate cyclase from Shigella dysenteriae serotype 1 (strain Sd197).